The following is a 202-amino-acid chain: Glycerol-3-phosphate acyltransferase 1 (202 aa).

5 helical membrane-spanning segments follow: residues 8-28 (AGMIDLFMILGAYLLGGMSTG), 85-105 (LSLTTLILCLIAGVAGHIWPL), 122-142 (ILVVDPMLASAAAGVFLFVLA), 146-166 (QFTLSGLAAILGAPILSLIMA), and 173-190 (AGLAVLAIFILLAHRKNI).

The protein belongs to the PlsY family. As to quaternary structure, probably interacts with PlsX.

The protein localises to the cell membrane. It catalyses the reaction an acyl phosphate + sn-glycerol 3-phosphate = a 1-acyl-sn-glycero-3-phosphate + phosphate. Its pathway is lipid metabolism; phospholipid metabolism. In terms of biological role, catalyzes the transfer of an acyl group from acyl-phosphate (acyl-PO(4)) to glycerol-3-phosphate (G3P) to form lysophosphatidic acid (LPA). This enzyme utilizes acyl-phosphate as fatty acyl donor, but not acyl-CoA or acyl-ACP. In Desulfitobacterium hafniense (strain Y51), this protein is Glycerol-3-phosphate acyltransferase 1.